Consider the following 302-residue polypeptide: Protoheme IX farnesyltransferase (302 aa).

Transmembrane regions (helical) follow at residues 28–48, 50–70, 95–115, 122–142, 150–170, 176–196, 221–241, 243–263, and 282–302; these read VVAL…PGVP, WSVL…AAVV, IAPL…MVVL, LTAW…TLFL, IVIG…AVTG, ALLL…ALAI, LHIL…FVTG, SGGI…QYAV, and ITYL…FVPA.

This sequence belongs to the UbiA prenyltransferase family. Protoheme IX farnesyltransferase subfamily.

The protein localises to the cell inner membrane. The catalysed reaction is heme b + (2E,6E)-farnesyl diphosphate + H2O = Fe(II)-heme o + diphosphate. The protein operates within porphyrin-containing compound metabolism; heme O biosynthesis; heme O from protoheme: step 1/1. In terms of biological role, converts heme B (protoheme IX) to heme O by substitution of the vinyl group on carbon 2 of heme B porphyrin ring with a hydroxyethyl farnesyl side group. The sequence is that of Protoheme IX farnesyltransferase from Marinobacter nauticus (strain ATCC 700491 / DSM 11845 / VT8) (Marinobacter aquaeolei).